The sequence spans 324 residues: Phospho-N-acetylmuramoyl-pentapeptide-transferase (324 aa).

9 helical membrane passes run 5-25 (VILFTIIMGFLISVLLSPIFI), 51-71 (TPTMGGIMIIFSITITTIVMI), 77-97 (ISPEMFLLLFVTLGYGLLGFL), 117-137 (LIGQIVIAVIFYAVFHYYQFA), 147-167 (VSFDLGWAYFILVVFMLVGGS), 176-196 (LDGLLSGTAAIAFGAFAILAW), 203-223 (VAIFSVAVAGAVLGFLVFNAH), 227-248 (VFMGDTGSLALGGAIVAIAILT), and 302-322 (VVVTFWTAGLLLAVLGIYIEV).

The protein belongs to the glycosyltransferase 4 family. MraY subfamily. The cofactor is Mg(2+).

The protein resides in the cell membrane. It catalyses the reaction UDP-N-acetyl-alpha-D-muramoyl-L-alanyl-gamma-D-glutamyl-meso-2,6-diaminopimeloyl-D-alanyl-D-alanine + di-trans,octa-cis-undecaprenyl phosphate = di-trans,octa-cis-undecaprenyl diphospho-N-acetyl-alpha-D-muramoyl-L-alanyl-D-glutamyl-meso-2,6-diaminopimeloyl-D-alanyl-D-alanine + UMP. Its pathway is cell wall biogenesis; peptidoglycan biosynthesis. Functionally, catalyzes the initial step of the lipid cycle reactions in the biosynthesis of the cell wall peptidoglycan: transfers peptidoglycan precursor phospho-MurNAc-pentapeptide from UDP-MurNAc-pentapeptide onto the lipid carrier undecaprenyl phosphate, yielding undecaprenyl-pyrophosphoryl-MurNAc-pentapeptide, known as lipid I. This Bacillus pumilus (strain SAFR-032) protein is Phospho-N-acetylmuramoyl-pentapeptide-transferase.